Consider the following 436-residue polypeptide: 3-ketoacyl-CoA thiolase (436 aa).

The active-site Acyl-thioester intermediate is cysteine 99. Catalysis depends on proton acceptor residues histidine 392 and cysteine 422.

This sequence belongs to the thiolase-like superfamily. Thiolase family. Heterotetramer of two alpha chains (FadJ) and two beta chains (FadI).

It is found in the cytoplasm. It catalyses the reaction an acyl-CoA + acetyl-CoA = a 3-oxoacyl-CoA + CoA. It participates in lipid metabolism; fatty acid beta-oxidation. Functionally, catalyzes the final step of fatty acid oxidation in which acetyl-CoA is released and the CoA ester of a fatty acid two carbons shorter is formed. This chain is 3-ketoacyl-CoA thiolase, found in Salmonella heidelberg (strain SL476).